The sequence spans 278 residues: Large ribosomal subunit protein uL2 (278 aa).

The disordered stretch occupies residues 218–278 (RPHNRGVVMN…IMRSRHQRKK (61 aa)).

It belongs to the universal ribosomal protein uL2 family. As to quaternary structure, part of the 50S ribosomal subunit. Forms a bridge to the 30S subunit in the 70S ribosome.

Its function is as follows. One of the primary rRNA binding proteins. Required for association of the 30S and 50S subunits to form the 70S ribosome, for tRNA binding and peptide bond formation. It has been suggested to have peptidyltransferase activity; this is somewhat controversial. Makes several contacts with the 16S rRNA in the 70S ribosome. This chain is Large ribosomal subunit protein uL2, found in Rhizobium etli (strain CIAT 652).